The primary structure comprises 631 residues: Mercuric reductase (631 aa).

2 consecutive HMA domains span residues 2–66 and 81–145; these read KKYR…YHPG and KKYR…YQPG. C13, C16, C92, and C95 together coordinate a metal cation. Residues A181, G201, and T206 each contribute to the FAD site. A disulfide bond links C207 and C212. The FAD site is built by K216, D472, and V480. The Hg(2+) site is built by C628 and C629.

This sequence belongs to the class-I pyridine nucleotide-disulfide oxidoreductase family. In terms of assembly, homodimer. FAD serves as cofactor.

It catalyses the reaction Hg + NADP(+) + H(+) = Hg(2+) + NADPH. Its function is as follows. Resistance to Hg(2+) in bacteria appears to be governed by a specialized system which includes mercuric reductase. MerA protein is responsible for volatilizing mercury as Hg(0). In Bacillus cereus, this protein is Mercuric reductase (merA).